A 428-amino-acid polypeptide reads, in one-letter code: CRS2-associated factor 1, mitochondrial (428 aa).

A mitochondrion-targeting transit peptide spans 1-21 (MLLLAGLLRRARPPRRPSVRR). 2 disordered regions span residues 33–100 (PPAS…REPK) and 129–152 (HADD…RERV). 2 consecutive CRM domains span residues 155-253 (EPLT…KRPV) and 275-371 (EGLT…IQDN). A disordered region spans residues 378-428 (SVLEEESAGAESENGDQEQASSDWASDECSQLSSSDEMPDDKSAISEADSD). Acidic residues predominate over residues 380–393 (LEEESAGAESENGD). Residues 394 to 413 (QEQASSDWASDECSQLSSSD) are compositionally biased toward polar residues.

Part of large ribonucleo-protein complexes that include group IIB introns.

It is found in the mitochondrion. May be involved in the splicing of group IIB introns in mitochondria. The sequence is that of CRS2-associated factor 1, mitochondrial from Oryza sativa subsp. japonica (Rice).